A 528-amino-acid polypeptide reads, in one-letter code: MSKVWVGGFLCVYGEEPSEECLALPRDTVQKELGSGNIPLPLNINHNEKATIGMVRGLFDLEHGLFCVAQIQSQTFMDIIRNIAGKSKLITAGSVIEPLPPDPEIECLSSSFPGLSLSSKVLQDENLDGKPFFHHVSVCGVGRRPGTIAIFGREISWILDRFSCISESEKRQVLEGVNVYSQGFDENLFSADLYDLLADSLDTSYIRKRFPKLQLDKQLCGLSKCTYIKASEPPVEIIVAATKVAGDQVQLTTEPGSELAVETCDVPVVHGNYDAVESATATTAMSNQNLPNTTPLLSSPPFSDCVFLPKDAFFSLLNVTTGQQPKIVPPVSVHPPVTEQYQMLPYSESAAKIAEHESNRYHSPCQAMYPYWQYSPVPQYPAALHGYRQSKTLKKRHFQSDSEDELSFPGDPEYTKKRRRHRVDNDDDKEMAREKNDLRELVDMIGMLRQEISALKHVRAQSPQRHIVPMETLPTIEEKGAASPKPSILNASLAPETVNRSLAGQNESTDLLKLNKKLFVDALNKMDS.

Active-site charge relay system residues include His-46, Ser-116, and His-135. The segment at 270 to 288 is interaction with pAP; it reads HGNYDAVESATATTAMSNQ. A disordered region spans residues 394–431; sequence KKRHFQSDSEDELSFPGDPEYTKKRRRHRVDNDDDKEM. Residues 416-422 carry the Nuclear localization signal motif; the sequence is KKRRRHR. Residues 508-528 form an interaction with major capsid protein region; sequence STDLLKLNKKLFVDALNKMDS.

The protein belongs to the herpesviridae capsid scaffolding protein family. In terms of assembly, homomultimer. Interacts with major capsid protein. As to quaternary structure, exists in a monomer-dimer equilibrium with the dimer being the active species. Post-translationally, capsid scaffolding protein is cleaved by assemblin after formation of the spherical procapsid. As a result, the capsid obtains its mature, icosahedral shape. Cleavages occur at two or more sites: release (R-site) and maturation (M-site).

It localises to the host cytoplasm. The protein resides in the host nucleus. It carries out the reaction Cleaves -Ala-|-Ser- and -Ala-|-Ala- bonds in the scaffold protein.. Acts as a scaffold protein by binding major capsid protein in the cytoplasm, inducing the nuclear localization of both proteins. Multimerizes in the nucleus such as major capsid protein forms the icosahedral T=16 capsid. Autocatalytic cleavage releases the assembly protein, and subsequently abolishes interaction with major capsid protein. Cleavages products are evicted from the capsid before or during DNA packaging. Functionally, protease that plays an essential role in virion assembly within the nucleus. Catalyzes the cleavage of the assembly protein after formation of the spherical procapsid. By that cleavage, the capsid matures and gains its icosahedral shape. The cleavage sites seem to include -Ala-Ser-, -Ala-Ala-, as well as Ala-Thr bonds. Assemblin and cleavages products are evicted from the capsid before or during DNA packaging. In terms of biological role, plays a major role in capsid assembly. Acts as a scaffold protein by binding major capsid protein. Multimerizes in the nucleus such as major capsid protein forms the icosahedral T=16 capsid. Cleaved by assemblin after capsid completion. The cleavages products are evicted from the capsid before or during DNA packaging. The protein is Capsid scaffolding protein (U53) of Homo sapiens (Human).